Consider the following 436-residue polypeptide: Testican-3 (436 aa).

An N-terminal signal peptide occupies residues 1 to 22 (MLKVSALLCVCAAAWCSQTLAA). 8 disulfides stabilise this stretch: C90–C101, C95–C111, C139–C169, C142–C162, C151–C183, C317–C341, C352–C359, and C361–C380. The Kazal-like domain maps to 133–185 (GLPSSTCKPCPIAYASPVCGSDGHSYSSQCKLEYQACVLGKQISIKCEGRCPC). The Thyroglobulin type-1 domain occupies 314-380 (DPPCHTELSN…GSRINGVADC (67 aa)). 2 O-linked (Xyl...) (glycosaminoglycan) serine glycosylation sites follow: S387 and S392. The interval 393 to 436 (GDFREWTDDEGEEDDIMNDKDDIEDDDEDEGDDDDDGDVHDGYI) is disordered. A compositionally biased stretch (acidic residues) spans 399–430 (TDDEGEEDDIMNDKDDIEDDDEDEGDDDDDGD).

Post-translationally, contains chondroitin sulfate and heparan sulfate O-linked oligosaccharides. In terms of tissue distribution, expressed in brain.

It localises to the secreted. Its subcellular location is the extracellular space. It is found in the extracellular matrix. Its function is as follows. May participate in diverse steps of neurogenesis. Inhibits the processing of pro-matrix metalloproteinase 2 (MMP-2) by MT1-MMP and MT3-MMP. May interfere with tumor invasion. This Mus musculus (Mouse) protein is Testican-3 (Spock3).